Reading from the N-terminus, the 961-residue chain is Mitogen-activated protein kinase kinase kinase 13-B (961 aa).

The interval 89 to 115 (RDQDEPENTAPQGSSHSGDGGNNSANE) is disordered. The span at 101 to 114 (GSSHSGDGGNNSAN) shows a compositional bias: low complexity. Residues 171 to 412 (ISELQWLGSG…FRQILMHLDI (242 aa)) enclose the Protein kinase domain. ATP-binding positions include 177-185 (LGSGAQGAV) and lysine 198. Residue aspartate 282 is the Proton acceptor of the active site. 2 leucine-zipper regions span residues 436–457 (VKKH…DEEL) and 489–510 (LSSI…EQTV). A coiled-coil region spans residues 460–497 (RRREELRHALDIREHYERKLERANNLYMELSSIMLQLE). Disordered regions lie at residues 507–644 (EQTV…ETSQ), 796–874 (TPPA…DVAC), and 933–961 (NAES…SSTW). Positions 563 to 580 (AEGSAASASPISGSPKTS) are enriched in low complexity. Positions 586 to 598 (GRYRSKPRHRRGN) are enriched in basic residues. Residues 613–628 (QESPAPSQQSSQHQTP) are compositionally biased toward low complexity. Residues 813-826 (DSSEGEEGEVDSEV) show a composition bias toward acidic residues. Residues 814-827 (SSEGEEGEVDSEVE) form an acidic region. A compositionally biased stretch (polar residues) spans 839 to 854 (STCQSYSTFSSENFSV). A compositionally biased stretch (acidic residues) spans 934–945 (AESDCDSSEGEC). Positions 949–961 (TVRTNNPVNSSTW) are enriched in polar residues.

The protein belongs to the protein kinase superfamily. Ser/Thr protein kinase family.

The protein localises to the cytoplasm. Its subcellular location is the membrane. It catalyses the reaction L-seryl-[protein] + ATP = O-phospho-L-seryl-[protein] + ADP + H(+). The catalysed reaction is L-threonyl-[protein] + ATP = O-phospho-L-threonyl-[protein] + ADP + H(+). Functionally, may have a role in the JNK signaling pathway. The polypeptide is Mitogen-activated protein kinase kinase kinase 13-B (map3k13-b) (Xenopus laevis (African clawed frog)).